The following is a 134-amino-acid chain: Small ribosomal subunit protein uS9 (134 aa).

The tract at residues 114–134 (QKEAKNFGGPGARSKYQKSYR) is disordered.

Belongs to the universal ribosomal protein uS9 family.

This chain is Small ribosomal subunit protein uS9, found in Methanosarcina mazei (strain ATCC BAA-159 / DSM 3647 / Goe1 / Go1 / JCM 11833 / OCM 88) (Methanosarcina frisia).